An 81-amino-acid chain; its full sequence is Albumin-1 (81 aa).

The propeptide occupies 27–34; that stretch reads LSSVAKMI.

Three disulfide bonds are probably present. In terms of processing, the C-terminal glycine may be removed from A1b.

Its function is as follows. A1b binds to basic 7S globulin (BG) and stimulates its phosphorylation activity. This chain is Albumin-1 (LEG1), found in Lupinus angustifolius (Narrow-leaved blue lupine).